Here is a 103-residue protein sequence, read N- to C-terminus: Large ribosomal subunit protein eL21 (103 aa).

This sequence belongs to the eukaryotic ribosomal protein eL21 family.

The chain is Large ribosomal subunit protein eL21 from Sulfolobus acidocaldarius (strain ATCC 33909 / DSM 639 / JCM 8929 / NBRC 15157 / NCIMB 11770).